We begin with the raw amino-acid sequence, 403 residues long: MKSVEEQLALIKRGADELLVEAELVEKLKRGQPLRIKAGFDPTAPDLHLGHTVLINKLRQFQDLGHQIIFLIGDFTGMIGDPSGKSATRPPLTREQVLDYAETYKSQVFKILDPAKTEVAFNSTWMDKLSPADFIRLSSQYTVARMLERDDFDKRYKSNQSIAIHEFLYPLVQGYDSVALKADVELGGTDQKFNLLMGRELQRAYGQEPQCILTMPLLEGLDGVKKMSKSLGNYVGIQEAPGIMYSKLVSIPDSLMWRYFELLSFRSMEEINGLKADCEAGANPRDIKIKLAEELVARFHGEEAAANAHRSAGNRMKEGELPDDLPEISVAAIEDMPISAVLNKAGLVKNAAVARDLLASGGVRIDGEVVDRGFVFKLGATHVCQAGKKAFGRVTLVSEESSK.

Residues 42–51 carry the 'HIGH' region motif; it reads PTAPDLHLGH. The 'KMSKS' region signature appears at 226–230; the sequence is KMSKS. Lysine 229 is a binding site for ATP. An S4 RNA-binding domain is found at 336 to 396; that stretch reads MPISAVLNKA…GKKAFGRVTL (61 aa).

It belongs to the class-I aminoacyl-tRNA synthetase family. TyrS type 2 subfamily. Homodimer.

It localises to the cytoplasm. The catalysed reaction is tRNA(Tyr) + L-tyrosine + ATP = L-tyrosyl-tRNA(Tyr) + AMP + diphosphate + H(+). Its function is as follows. Catalyzes the attachment of tyrosine to tRNA(Tyr) in a two-step reaction: tyrosine is first activated by ATP to form Tyr-AMP and then transferred to the acceptor end of tRNA(Tyr). This is Tyrosine--tRNA ligase from Pseudomonas savastanoi pv. phaseolicola (strain 1448A / Race 6) (Pseudomonas syringae pv. phaseolicola (strain 1448A / Race 6)).